Consider the following 138-residue polypeptide: Putative pre-16S rRNA nuclease (138 aa).

It belongs to the YqgF nuclease family.

The protein resides in the cytoplasm. Could be a nuclease involved in processing of the 5'-end of pre-16S rRNA. This is Putative pre-16S rRNA nuclease from Citrobacter koseri (strain ATCC BAA-895 / CDC 4225-83 / SGSC4696).